A 282-amino-acid polypeptide reads, in one-letter code: Elongation factor Ts (282 aa).

The interval 80-83 (TDFV) is involved in Mg(2+) ion dislocation from EF-Tu.

The protein belongs to the EF-Ts family.

The protein localises to the cytoplasm. Associates with the EF-Tu.GDP complex and induces the exchange of GDP to GTP. It remains bound to the aminoacyl-tRNA.EF-Tu.GTP complex up to the GTP hydrolysis stage on the ribosome. The chain is Elongation factor Ts from Chlamydia caviae (strain ATCC VR-813 / DSM 19441 / 03DC25 / GPIC) (Chlamydophila caviae).